A 363-amino-acid polypeptide reads, in one-letter code: Pyrimidine monooxygenase RutA (363 aa).

FMN is bound by residues 49 to 50 (IK), Asn-115, Glu-124, 140 to 141 (RY), and Ser-190.

It belongs to the NtaA/SnaA/DszA monooxygenase family. RutA subfamily.

The catalysed reaction is uracil + FMNH2 + NADH + O2 = (Z)-3-ureidoacrylate + FMN + NAD(+) + H2O + H(+). It carries out the reaction thymine + FMNH2 + NADH + O2 = (Z)-2-methylureidoacrylate + FMN + NAD(+) + H2O + H(+). In terms of biological role, catalyzes the pyrimidine ring opening between N-3 and C-4 by an unusual flavin hydroperoxide-catalyzed mechanism, adding oxygen atoms in the process to yield ureidoacrylate peracid, that immediately reacts with FMN forming ureidoacrylate and FMN-N(5)-oxide. The FMN-N(5)-oxide reacts spontaneously with NADH to produce FMN. Requires the flavin reductase RutF to regenerate FMN in vivo. In Enterobacter cloacae subsp. cloacae (strain ATCC 13047 / DSM 30054 / NBRC 13535 / NCTC 10005 / WDCM 00083 / NCDC 279-56), this protein is Pyrimidine monooxygenase RutA.